The chain runs to 596 residues: Transcription factor EGL1 (596 aa).

Positions 401-450 (EETGNHALSEKKRREKLNERFMTLRSIIPSISKIDKVSILDDTIEYLQDL) constitute a bHLH domain.

As to quaternary structure, efficient DNA binding requires dimerization with another bHLH protein. Homodimer and heterodimer with GL3. Interacts with CPC, MYB0/GL1, MYB5, MYB23, MYB113, MYB114, MYB75/PAP1, MYB90/PAP2, TT2, TRY, TTG1 and MYB66/WER. Ubiquitous with higher levels in buds and flowers. Specifically localized in developing root hair cells. Expressed in epidermal root hair cells (trichoblasts) and moves to root hairless cells (atrichoblasts) by a cell-to-cell movement through plasmodesmata (at protein level).

The protein localises to the nucleus. In terms of biological role, transcription activator, when associated with MYB75/PAP1, MYB90/PAP2 or TT2. Involved in epidermal cell fate specification. Negatively regulates stomata formation but promotes trichome formation. Together with MYB66/WER, promotes the formation of non-hair cells in root epidermis cells in the N position. Whereas together with CPC, promotes the formation of hair cells in root epidermis cells in the H position by inhibiting non-hair cell formation. Also seems to play a role in the activation of anthocyanin biosynthesis, probably together with MYB75/PAP1. Involved in seed mucilage production. Activates the transcription of GL2. The sequence is that of Transcription factor EGL1 (BHLH2) from Arabidopsis thaliana (Mouse-ear cress).